Reading from the N-terminus, the 236-residue chain is Leucyl/phenylalanyl-tRNA--protein transferase (236 aa).

It belongs to the L/F-transferase family.

It localises to the cytoplasm. The catalysed reaction is N-terminal L-lysyl-[protein] + L-leucyl-tRNA(Leu) = N-terminal L-leucyl-L-lysyl-[protein] + tRNA(Leu) + H(+). It carries out the reaction N-terminal L-arginyl-[protein] + L-leucyl-tRNA(Leu) = N-terminal L-leucyl-L-arginyl-[protein] + tRNA(Leu) + H(+). It catalyses the reaction L-phenylalanyl-tRNA(Phe) + an N-terminal L-alpha-aminoacyl-[protein] = an N-terminal L-phenylalanyl-L-alpha-aminoacyl-[protein] + tRNA(Phe). In terms of biological role, functions in the N-end rule pathway of protein degradation where it conjugates Leu, Phe and, less efficiently, Met from aminoacyl-tRNAs to the N-termini of proteins containing an N-terminal arginine or lysine. The polypeptide is Leucyl/phenylalanyl-tRNA--protein transferase (Shewanella putrefaciens (strain CN-32 / ATCC BAA-453)).